Consider the following 250-residue polypeptide: Tripartite motif-containing protein 73 (250 aa).

The segment at 16–57 adopts an RING-type zinc-finger fold; that stretch reads CPICLEVFKESLMLQCGHSYCKGCLVSLSYHLDTKVRCPMCW. The segment at 84–125 adopts a B box-type zinc-finger fold; it reads PEPKVCVHHRNPLSLFCEKDQELICGLCGLLGSHQHHPVTPV. The Zn(2+) site is built by Cys89, His92, Cys111, and His117. Coiled-coil stretches lie at residues 125–169 and 204–235; these read VSTV…NESD and LVAS…FGNE.

Belongs to the TRIM/RBCC family.

The chain is Tripartite motif-containing protein 73 (TRIM73) from Homo sapiens (Human).